Reading from the N-terminus, the 388-residue chain is L-cysteine desulfidase (388 aa).

Cysteine 25 functions as the Proton acceptor in the catalytic mechanism. Cysteine 282, cysteine 322, and cysteine 329 together coordinate [4Fe-4S] cluster.

This sequence belongs to the L-cysteine desulfidase family. As to quaternary structure, homotrimer. [4Fe-4S] cluster serves as cofactor.

The catalysed reaction is L-cysteine + H2O = hydrogen sulfide + pyruvate + NH4(+) + H(+). Functionally, catalyzes the cleavage of L-cysteine to form 2-aminoprop-2-enoate and sulfide. The former then spontaneously hydrolyzes to pyruvate and NH(3). May be responsible for the production of sulfide required for the biosynthesis of iron-sulfur centers in this archaea. Is very specific for L-cysteine, with no activity being detected with D-cysteine, L-homocysteine, 3-mercaptopropionate (cysteine without the amino group), cysteamine (cysteine without the carboxylate), or mercaptolactate (the hydroxyl analog of cysteine). The protein is L-cysteine desulfidase of Methanocaldococcus jannaschii (strain ATCC 43067 / DSM 2661 / JAL-1 / JCM 10045 / NBRC 100440) (Methanococcus jannaschii).